Consider the following 372-residue polypeptide: Lung adenoma susceptibility protein 2 (372 aa).

The first 31 residues, 1–31 (MAKSKTKHRLCSQESSVSALLASCTLSGSNS), serve as a signal peptide directing secretion. Ser161 carries the phosphoserine modification. The tract at residues 248–268 (KSPVPVNSDDSPQQTSRAKSA) is disordered. Residues 255 to 265 (SDDSPQQTSRA) show a composition bias toward polar residues.

The protein resides in the secreted. Might play a role in cell proliferation. In Homo sapiens (Human), this protein is Lung adenoma susceptibility protein 2 (LAS2).